Here is a 434-residue protein sequence, read N- to C-terminus: Isocitrate lyase (434 aa).

Substrate is bound at residue 91–93 (SGW). Mg(2+) is bound at residue D157. Catalysis depends on C195, which acts as the Proton acceptor. Residues 196-197 (GH), R232, 317-321 (NCSPS), and T351 contribute to the substrate site.

The protein belongs to the isocitrate lyase/PEP mutase superfamily. Isocitrate lyase family. Homotetramer. It depends on Mg(2+) as a cofactor.

It carries out the reaction D-threo-isocitrate = glyoxylate + succinate. The protein operates within carbohydrate metabolism; glyoxylate cycle; (S)-malate from isocitrate: step 1/2. Involved in the metabolic adaptation in response to environmental changes. Catalyzes the reversible formation of succinate and glyoxylate from isocitrate, a key step of the glyoxylate cycle, which operates as an anaplerotic route for replenishing the tricarboxylic acid cycle during growth on fatty acid substrates. This is Isocitrate lyase (aceA) from Salmonella typhimurium (strain LT2 / SGSC1412 / ATCC 700720).